Reading from the N-terminus, the 490-residue chain is Dual specificity protein kinase CLK3 (490 aa).

The interval 1-138 (MHHCKRYRSP…SKRSSRSVED (138 aa)) is disordered. Residue Y7 is modified to Phosphotyrosine. S9, S49, S51, S67, S76, and S78 each carry phosphoserine. Composition is skewed to basic and acidic residues over residues 26–56 (YSRE…DRIP) and 63–76 (EHRD…EERS). Residues 88 to 116 (RSRHRRRSRERAPYRTRKHAHHCHKRRTR) are compositionally biased toward basic residues. A compositionally biased stretch (low complexity) spans 117 to 130 (SCSSASSRSQQSSK). S135 bears the Phosphoserine mark. The region spanning 156–472 (YEIVGNLGEG…LAEALLHPFF (317 aa)) is the Protein kinase domain. Residues 162–170 (LGEGTFGKV) and K186 contribute to the ATP site. The Proton acceptor role is filled by D283.

This sequence belongs to the protein kinase superfamily. CMGC Ser/Thr protein kinase family. Lammer subfamily. Post-translationally, autophosphorylates on all three types of residues. In terms of tissue distribution, present at high levels in testis and ovary. In testis, expression is restricted to elongated, maturing spermatozoa. Also present in spleen, brain, lung and liver (at protein level).

Its subcellular location is the nucleus. It localises to the cytoplasm. The protein localises to the cytoplasmic vesicle. The protein resides in the secretory vesicle. It is found in the acrosome. It carries out the reaction L-seryl-[protein] + ATP = O-phospho-L-seryl-[protein] + ADP + H(+). It catalyses the reaction L-threonyl-[protein] + ATP = O-phospho-L-threonyl-[protein] + ADP + H(+). The enzyme catalyses L-tyrosyl-[protein] + ATP = O-phospho-L-tyrosyl-[protein] + ADP + H(+). Its activity is regulated as follows. Leucettine L41 inhibits its kinase activity and affects the regulation of alternative splicing mediated by phosphorylation of SR proteins. In terms of biological role, dual specificity kinase acting on both serine/threonine and tyrosine-containing substrates. Phosphorylates serine- and arginine-rich (SR) proteins of the spliceosomal complex. May be a constituent of a network of regulatory mechanisms that enable SR proteins to control RNA splicing and can cause redistribution of SR proteins from speckles to a diffuse nucleoplasmic distribution. Phosphorylates SRSF1 and SRSF3. Regulates the alternative splicing of tissue factor (F3) pre-mRNA in endothelial cells. This is Dual specificity protein kinase CLK3 from Mus musculus (Mouse).